Consider the following 456-residue polypeptide: Tyrosinase-like protein (456 aa).

Residues methionine 1 to cysteine 22 form the signal peptide. Cu cation is bound by residues histidine 145, histidine 154, histidine 163, histidine 295, histidine 299, and histidine 322.

It belongs to the tyrosinase family. Requires Cu(2+) as cofactor. In terms of tissue distribution, prismatic layer of shell (at protein level).

The protein localises to the secreted. The polypeptide is Tyrosinase-like protein (Pinctada maxima (Silver-lipped pearl oyster)).